Consider the following 179-residue polypeptide: Large ribosomal subunit protein uL6 (179 aa).

This sequence belongs to the universal ribosomal protein uL6 family. In terms of assembly, part of the 50S ribosomal subunit.

Functionally, this protein binds to the 23S rRNA, and is important in its secondary structure. It is located near the subunit interface in the base of the L7/L12 stalk, and near the tRNA binding site of the peptidyltransferase center. This chain is Large ribosomal subunit protein uL6, found in Finegoldia magna (strain ATCC 29328 / DSM 20472 / WAL 2508) (Peptostreptococcus magnus).